The chain runs to 616 residues: ATP-dependent RNA helicase VAD1 (616 aa).

The segment at 1–35 (MASSSTLANDDWKQGLAAPPKDLRPQTEDVTATQG) is disordered. Positions 36 to 64 (SRFEDFGLRRELLMGIYTAGFERPSPIQE) match the Q motif motif. The 172-residue stretch at 67-238 (IPMALTGRDI…DQHMVQPYEI (172 aa)) folds into the Helicase ATP-binding domain. 80-87 (AKNGTGKT) is a binding site for ATP. A DEAD box motif is present at residues 186-189 (DEAD). The region spanning 248–408 (GVTQYYAYVE…PIPAVIDPVL (161 aa)) is the Helicase C-terminal domain. The tract at residues 416–616 (EEERESPPPK…GASQSQQAQA (201 aa)) is disordered. 3 stretches are compositionally biased toward low complexity: residues 427 to 441 (AAIAAPPAQQQPQQR), 458 to 500 (PAAA…NSSP), and 508 to 523 (YPQQAPTQAQGPAQMQ). Polar residues predominate over residues 529–545 (PATQPQASAQIPVQGQT). Composition is skewed to low complexity over residues 550–579 (PRAQQQGQQQPSQPGQAEGQSQPNRRPNTG) and 606–616 (AGASQSQQAQA).

It belongs to the DEAD box helicase family. DDX6/DHH1 subfamily.

Its subcellular location is the cytoplasm. It is found in the P-body. The enzyme catalyses ATP + H2O = ADP + phosphate + H(+). ATP-dependent RNA helicase involved in mRNA turnover, and more specifically in mRNA decapping. Is involved in G1/S DNA-damage checkpoint recovery, probably through the regulation of the translational status of a subset of mRNAs. May also have a role in translation and mRNA nuclear export. Blocks autophagy in nutrient-rich conditions by, at least partly, binding and repressing the expression of a set of ATG genes, including ATG3, ATG7, ATG8, ATG19, ATG20 and ATG22. VAD1-mediated repression of autophagy is regulated by TOR-dependent phosphorylation of the decapping enzyme DCP2. Regulates multiple virulence-associated genes. Repression of autophagy by VAD1 also regulates the pathogenesis. The polypeptide is ATP-dependent RNA helicase VAD1 (Cryptococcus neoformans var. grubii serotype A (strain H99 / ATCC 208821 / CBS 10515 / FGSC 9487) (Filobasidiella neoformans var. grubii)).